The chain runs to 265 residues: Polyphosphate glucokinase (265 aa).

The span at 1–18 (MTSTGPETSETPGATTQR) shows a compositional bias: polar residues. Residues 1–22 (MTSTGPETSETPGATTQRHGFG) are disordered. 24–29 (DVGGSG) contacts ATP.

This sequence belongs to the ROK (NagC/XylR) family. Homodimer.

It carries out the reaction [phosphate](n) + D-glucose = [phosphate](n-1) + D-glucose 6-phosphate + H(+). The enzyme catalyses D-glucose + ATP = D-glucose 6-phosphate + ADP + H(+). In terms of biological role, catalyzes the phosphorylation of glucose using polyphosphate or ATP as the phosphoryl donor. Polyphosphate, rather than ATP, seems to be the major phosphate donor for the enzyme in M.tuberculosis. The protein is Polyphosphate glucokinase (ppgK) of Mycobacterium tuberculosis (strain CDC 1551 / Oshkosh).